A 64-amino-acid polypeptide reads, in one-letter code: MAKAAKTIKVEQTGSAIRRHHSQRSTLVGLKLNKIGRTSELQDTPEIRGMIAKVRHIVRVIDET.

Residues 1-22 form a disordered region; that stretch reads MAKAAKTIKVEQTGSAIRRHHS.

Belongs to the universal ribosomal protein uL30 family. As to quaternary structure, part of the 50S ribosomal subunit.

In Nitrobacter winogradskyi (strain ATCC 25391 / DSM 10237 / CIP 104748 / NCIMB 11846 / Nb-255), this protein is Large ribosomal subunit protein uL30.